We begin with the raw amino-acid sequence, 266 residues long: Receptor-recognizing protein gp38 (266 aa).

Short sequence motifs (GRM) lie at residues 116-123 (GRGGNGGY), 126-137 (SGGDGNGTQGGH), 157-171 (AGGG…RPHS), 174-184 (KWQDIGGGGGR), 187-191 (GGAGG), 194-200 (YSGGAAS), 202-209 (EGPGGGYD), 214-220 (HSGAGGN), 223-228 (AAGQNA), and 232-246 (GGKV…ASGH).

The protein belongs to the receptor-recognizing protein gp38 family.

Its subcellular location is the virion. Functionally, receptor binding protein (RBP) that is at the tip of the long tail fibers and serves as the phage recognition site for the attachment host receptor. Probably uses the host receptor OmpA. This Enterobacteria phage Ox2 (Bacteriophage Ox2) protein is Receptor-recognizing protein gp38 (38).